We begin with the raw amino-acid sequence, 148 residues long: uncharacterized protein (148 aa).

Over residues 1-17 (MCPPVRQRPAQAPPAKR) the composition is skewed to low complexity. Disordered stretches follow at residues 1-86 (MCPP…VQSP) and 122-148 (RAHRLPQPKPPCQSRQRPSPDSQTSPC). A compositionally biased stretch (basic residues) spans 38–57 (RPPKMQRRPRPPVAKRRRFP). Residues 134–148 (QSRQRPSPDSQTSPC) show a composition bias toward polar residues.

This sequence belongs to the Epstein-Barr virus BLLF2 family.

This is an uncharacterized protein from Homo sapiens (Human).